Consider the following 235-residue polypeptide: Adenosine 5'-phosphosulfate reductase (235 aa).

Residues cysteine 121, cysteine 122, cysteine 204, and cysteine 207 each contribute to the [4Fe-4S] cluster site. Residue cysteine 230 is the Nucleophile; cysteine thiosulfonate intermediate of the active site.

The protein belongs to the PAPS reductase family. CysH subfamily. [4Fe-4S] cluster is required as a cofactor.

The protein resides in the cytoplasm. The catalysed reaction is [thioredoxin]-disulfide + sulfite + AMP + 2 H(+) = adenosine 5'-phosphosulfate + [thioredoxin]-dithiol. The protein operates within sulfur metabolism; hydrogen sulfide biosynthesis; sulfite from sulfate. Its function is as follows. Catalyzes the formation of sulfite from adenosine 5'-phosphosulfate (APS) using thioredoxin as an electron donor. The chain is Adenosine 5'-phosphosulfate reductase from Anoxybacillus flavithermus (strain DSM 21510 / WK1).